Reading from the N-terminus, the 184-residue chain is Tumor necrosis factor receptor superfamily member 13C (184 aa).

Over 1–78 (MRRGPRSLRG…EAALPLPGLL (78 aa)) the chain is Extracellular. The stretch at 18 to 35 (PCVPAECFDLLVRHCVAC) is one TNFR-Cys; truncated repeat. 2 disulfides stabilise this stretch: C19–C32 and C24–C35. Residues 26–31 (DLLVRH) are essential for TNFSF13B/TALL1/BAFF/BLyS binding. The tract at residues 43–62 (PKPAGASSPAPRTALQPQES) is disordered. A helical; Signal-anchor for type III membrane protein membrane pass occupies residues 79-99 (FGAPALLGLALVLALVLVGLV). Residues 100–184 (SWRRRQRRLR…TTKTAGPEQQ (85 aa)) are Cytoplasmic-facing. The tract at residues 107–184 (RLRGASSAEA…TTKTAGPEQQ (78 aa)) is disordered. The segment covering 118-128 (DGDKDAPEPLD) has biased composition (basic and acidic residues). Polar residues predominate over residues 168-184 (LGSTELVTTKTAGPEQQ).

As to expression, highly expressed in spleen and lymph node, and in resting B-cells. Detected at lower levels in activated B-cells, resting CD4+ T-cells, in thymus and peripheral blood leukocytes.

Its subcellular location is the membrane. Functionally, B-cell receptor specific for TNFSF13B/TALL1/BAFF/BLyS. Promotes the survival of mature B-cells and the B-cell response. The polypeptide is Tumor necrosis factor receptor superfamily member 13C (TNFRSF13C) (Homo sapiens (Human)).